Consider the following 237-residue polypeptide: Phosphoribosylaminoimidazole-succinocarboxamide synthase (237 aa).

This sequence belongs to the SAICAR synthetase family.

It catalyses the reaction 5-amino-1-(5-phospho-D-ribosyl)imidazole-4-carboxylate + L-aspartate + ATP = (2S)-2-[5-amino-1-(5-phospho-beta-D-ribosyl)imidazole-4-carboxamido]succinate + ADP + phosphate + 2 H(+). It participates in purine metabolism; IMP biosynthesis via de novo pathway; 5-amino-1-(5-phospho-D-ribosyl)imidazole-4-carboxamide from 5-amino-1-(5-phospho-D-ribosyl)imidazole-4-carboxylate: step 1/2. This is Phosphoribosylaminoimidazole-succinocarboxamide synthase from Campylobacter fetus subsp. fetus (strain 82-40).